A 350-amino-acid chain; its full sequence is tRNA dimethylallyltransferase (350 aa).

An ATP-binding site is contributed by 34–41; that stretch reads GPTASGKT. 36–41 contacts substrate; the sequence is TASGKT. 3 interaction with substrate tRNA regions span residues 63 to 66, 187 to 191, and 274 to 279; these read DSAL, QRIQR, and RCVGYR.

The protein belongs to the IPP transferase family. As to quaternary structure, monomer. Requires Mg(2+) as cofactor.

It catalyses the reaction adenosine(37) in tRNA + dimethylallyl diphosphate = N(6)-dimethylallyladenosine(37) in tRNA + diphosphate. In terms of biological role, catalyzes the transfer of a dimethylallyl group onto the adenine at position 37 in tRNAs that read codons beginning with uridine, leading to the formation of N6-(dimethylallyl)adenosine (i(6)A). The chain is tRNA dimethylallyltransferase from Paracidovorax citrulli (strain AAC00-1) (Acidovorax citrulli).